The primary structure comprises 431 residues: MRKPFYKILYVQVLFAIFVGILLGHFWPDTGVAMKPLGDGFIKLIKMIIGPIIFCTVVTGIAGMSDMKKVGRVGGKALLYFEIVSTFALLIGLGAAHLLKPGVGFNIDPATLDTKAIEQYVSKAHGQSTVEFLMHIIPDTIFSAFSNGDILQILLVSLFFGAALAAIGERARIVVQLIEQVSKVFFHIVHVITKVAPIGAFGAMAFTIGKYGLGSLVPLLKLIGTFYFTAIVFVVFVLGAIARATGFNILRFISYIKEELLIVLGTSSSEAALPHLMEKLEKLGCSKSVVGLVVPTGYSFNLDGTNIYMTMAVIFIAQATGIELTLLQQLTILGVAMLTSKGASGVTGAGFITLAATLAVVPTIPVAGMVLILGIDRFMSECRALTNIIGNGVATVVVSAWEHELDRAQLKRTLQQGGEDEAELADAGQNV.

The next 8 helical transmembrane spans lie at 8 to 28 (ILYVQVLFAIFVGILLGHFWP), 44 to 64 (LIKMIIGPIIFCTVVTGIAGM), 78 to 98 (LLYFEIVSTFALLIGLGAAHL), 148 to 168 (GDILQILLVSLFFGAALAAIG), 188 to 208 (IVHVITKVAPIGAFGAMAFTI), 222 to 242 (LIGTFYFTAIVFVVFVLGAIA), 307 to 327 (IYMTMAVIFIAQATGIELTLL), and 355 to 375 (AATLAVVPTIPVAGMVLILGI).

This sequence belongs to the dicarboxylate/amino acid:cation symporter (DAACS) (TC 2.A.23) family.

Its subcellular location is the cell inner membrane. In terms of biological role, responsible for the transport of dicarboxylates such as succinate, fumarate, and malate from the periplasm across the membrane. The chain is C4-dicarboxylate transport protein from Cupriavidus pinatubonensis (strain JMP 134 / LMG 1197) (Cupriavidus necator (strain JMP 134)).